Here is a 275-residue protein sequence, read N- to C-terminus: Methylesterase 10 (275 aa).

Catalysis depends on Ser96, which acts as the Acyl-ester intermediate. Active-site charge relay system residues include Asp225 and His253.

Belongs to the AB hydrolase superfamily. Methylesterase family.

It carries out the reaction methyl (-)-jasmonate + H2O = jasmonate + methanol + H(+). It participates in plant hormone biosynthesis. Its pathway is lipid metabolism; oxylipin biosynthesis. In terms of biological role, methylesterase shown to have methyl jasmonate (MeJA) esterase activity in vitro. This chain is Methylesterase 10, found in Arabidopsis thaliana (Mouse-ear cress).